The sequence spans 313 residues: Calcyphosin-2 (313 aa).

EF-hand domains follow at residues 144–179 (RILTGLGKYFQQLDKEGNGLLDKADFKQALKVFHLE), 180–215 (VSEKDFESAWLILDDNGNGKVDYGEFKRGIIGEMNE), and 216–251 (YRKSYVRKAFMKLDFNKTGSVPITNIRKCYCAKKHS). The Ca(2+) site is built by aspartate 193, asparagine 195, asparagine 197, lysine 199, and glutamate 204.

In Macaca fascicularis (Crab-eating macaque), this protein is Calcyphosin-2 (CAPS2).